The sequence spans 179 residues: Large ribosomal subunit protein uL22c (179 aa).

Belongs to the universal ribosomal protein uL22 family. Part of the 50S ribosomal subunit.

The protein localises to the plastid. It localises to the chloroplast. In terms of biological role, this protein binds specifically to 23S rRNA. Functionally, the globular domain of the protein is located near the polypeptide exit tunnel on the outside of the subunit, while an extended beta-hairpin is found that lines the wall of the exit tunnel in the center of the 70S ribosome. This is Large ribosomal subunit protein uL22c (rpl22) from Ranunculus macranthus (Large buttercup).